The primary structure comprises 270 residues: Transcription factor PU.1 (270 aa).

Residues leucine 124 to glycine 162 form a disordered region. Residues serine 140 and serine 146 each carry the phosphoserine modification. The span at leucine 153–glycine 162 shows a compositional bias: low complexity. A DNA-binding region (ETS) is located at residues isoleucine 170–serine 253. DNA is bound by residues lysine 217, arginine 230, arginine 233, and lysine 243.

The protein belongs to the ETS family. As to quaternary structure, binds DNA as a monomer. Can form homomers. Directly interacts with CEBPD/NF-IL6-beta; this interaction does not affect DNA-binding properties of each partner. Interacts with NONO/p54(nrb). Interacts with RUNX1/AML1. Interacts with GFI1; the interaction represses SPI1 transcriptional activity, hence blocks SPI1-induced macrophage differentiation of myeloid progenitor cells. Interacts with CEBPE. Interacts with IRF4/Pip and IRF8. Interacts with JUN. Interacts with RB1. Interacts with TBP.

It is found in the nucleus. Its activity is regulated as follows. Transcriptional activity at macrophage-specific genes is inhibited by interaction with GFI1, which results in the inhibition of SPI1-induced macrophage differentiation of myeloid progenitor cells, but not that of the granulocyte lineage. Functionally, pioneer transcription factor, which controls hematopoietic cell fate by decompacting stem cell heterochromatin and allowing other transcription factors to enter otherwise inaccessible genomic sites. Once in open chromatin, can directly control gene expression by binding genetic regulatory elements and can also more broadly influence transcription by recruiting transcription factors, such as interferon regulatory factors (IRFs), to otherwise inaccessible genomic regions. Transcriptionally activates genes important for myeloid and lymphoid lineages, such as CSF1R. Transcriptional activation from certain promoters, possibly containing low affinity binding sites, is achieved cooperatively with other transcription factors. FCER1A transactivation is achieved in cooperation with GATA1. May be particularly important for the pro- to pre-B cell transition. Binds (via the ETS domain) onto the purine-rich DNA core sequence 5'-GAGGAA-3', also known as the PU-box. In vitro can bind RNA and interfere with pre-mRNA splicing. This chain is Transcription factor PU.1 (SPI1), found in Sus scrofa (Pig).